Here is a 947-residue protein sequence, read N- to C-terminus: Microtubule cross-linking factor 3 (947 aa).

The signal sequence occupies residues 1–21; it reads MSQPPIGGAAPATAAASPAAA. 3 disordered regions span residues 1 to 251, 266 to 368, and 496 to 524; these read MSQP…SYWK, KERA…TLKN, and LSLK…DNED. Low complexity-rich tracts occupy residues 9–24, 72–81, and 109–137; these read AAPA…AATE, QQQLQQQQQQ, and APKG…ALGG. Residues 141-151 are compositionally biased toward basic and acidic residues; it reads GPPEEPPRELE. A compositionally biased stretch (gly residues) spans 164 to 180; that stretch reads GEGGGGGGEGGGAGGGS. Residues 214–236 are compositionally biased toward low complexity; that stretch reads ASPSPSSSSAGKTPGTGSRNSGS. Over residues 237 to 248 the composition is skewed to gly residues; sequence GVAGGGSGGGGS. Composition is skewed to low complexity over residues 287 to 297 and 304 to 325; these read SSRSSPVSGPP and AVAS…AEGS. A coiled-coil region spans residues 342–726; it reads HPQQLQEQEE…GKVMQLQYEN (385 aa). Composition is skewed to basic and acidic residues over residues 355–368 and 496–513; these read EMEK…TLKN and LSLK…EKKA. Residue S569 is modified to Phosphoserine. Positions 743 to 786 are disordered; it reads GIRGSPRDSDAESDAGKKESDDDSRPPHRKREGPIGGESDSEEV. Residues 747–768 are compositionally biased toward basic and acidic residues; it reads SPRDSDAESDAGKKESDDDSRP. S781 carries the post-translational modification Phosphoserine. Residues 811–835 are a coiled coil; sequence DRQQMKDIRSEAERLGKTIDRLIAD. A helical membrane pass occupies residues 915–935; sequence PIILLILILVLFSSLSYTTIF.

Belongs to the MTCL family.

It is found in the membrane. The sequence is that of Microtubule cross-linking factor 3 from Homo sapiens (Human).